The sequence spans 310 residues: Olfactory receptor 2A1/2A42 (310 aa).

The Extracellular segment spans residues 1 to 24 (MGENQTMVTEFLLLGFLLGPRIQM). Residue N4 is glycosylated (N-linked (GlcNAc...) asparagine). A helical membrane pass occupies residues 25–48 (LLFGLFSLFYIFTLLGNGAILGLI). Topologically, residues 49–56 (SLDSRLHT) are cytoplasmic. The chain crosses the membrane as a helical span at residues 57–78 (PMYFFLSHLAVVDIAYTRNTVP). The Extracellular segment spans residues 79–99 (QMLANLLHPAKPISFAGCMTQ). C96 and C188 form a disulfide bridge. A helical transmembrane segment spans residues 100–119 (TFLCLSFGHSECLLLVLMSY). Topologically, residues 120–138 (DRYVAICHPLRYSVIMTWR) are cytoplasmic. A helical membrane pass occupies residues 139-157 (VCITLAVTSWTCGSLLALA). The Extracellular segment spans residues 158 to 195 (HVVLILRLPFSGPHEINHFFCEILSVLRLACADTWLNQ). The helical transmembrane segment at 196–218 (VVIFAACVFFLVGPPSLVLVSYS) threads the bilayer. Over 219 to 235 (HILAAILRIQSGEGRRK) the chain is Cytoplasmic. The chain crosses the membrane as a helical span at residues 236–258 (AFSTCSSHLCVVGLFFGSAIIMY). Topologically, residues 259–271 (MAPKSRHPEEQQK) are extracellular. A helical membrane pass occupies residues 272–291 (VFFLFYSFFNPTLNPLIYSL). At 292 to 310 (RNGEVKGALRRALGKESHS) the chain is on the cytoplasmic side.

Belongs to the G-protein coupled receptor 1 family.

The protein localises to the cell membrane. Odorant receptor. The polypeptide is Olfactory receptor 2A1/2A42 (OR2A1) (Homo sapiens (Human)).